Consider the following 216-residue polypeptide: Vascular endothelial growth factor A (216 aa).

Residues 1–26 (MNFLLTWIHWGLAALLYLQSAELSKA) form the signal peptide. Intrachain disulfides connect Cys-52–Cys-94, Cys-83–Cys-128, and Cys-87–Cys-130. An N-linked (GlcNAc...) asparagine glycan is attached at Asn-101. Over residues 132–141 (PKKDVKNKQE) the composition is skewed to basic and acidic residues. A disordered region spans residues 132–167 (PKKDVKNKQEKKSKRGKGKGQKRKRKKGRYKPPSFH). A compositionally biased stretch (basic residues) spans 142-161 (KKSKRGKGKGQKRKRKKGRY).

The protein belongs to the PDGF/VEGF growth factor family. Homodimer; disulfide-linked. Also found as heterodimer with PGF.

Functionally, growth factor active in angiogenesis, vasculogenesis and endothelial cell growth. Induces endothelial cell proliferation, promotes cell migration, inhibits apoptosis and induces permeabilization of blood vessels. Binds to the FLT1/VEGFR1 and KDR/VEGFR2 receptors, heparan sulfate and heparin. The protein is Vascular endothelial growth factor A (VEGFA) of Gallus gallus (Chicken).